The following is a 426-amino-acid chain: RuvB-like protein 1 (426 aa).

62–69 (GPVGSGKT) serves as a coordination point for ATP.

Belongs to the RuvB family. In terms of assembly, component of the SWR1 chromatin remodeling complex, the INO80 chromatin remodeling complex, and of the R2TP complex.

It is found in the nucleus. It carries out the reaction ATP + H2O = ADP + phosphate + H(+). Functionally, DNA helicase which participates in several chromatin remodeling complexes, including the SWR1 and the INO80 complexes. The SWR1 complex mediates the ATP-dependent exchange of histone H2A for the H2A variant HZT1 leading to transcriptional regulation of selected genes by chromatin remodeling. The INO80 complex remodels chromatin by shifting nucleosomes and is involved in DNA repair. Also involved in pre-rRNA processing. This Encephalitozoon cuniculi (strain GB-M1) (Microsporidian parasite) protein is RuvB-like protein 1 (RVB1).